The following is a 452-amino-acid chain: Phosphatidylserine synthase 2 (452 aa).

The Cytoplasmic segment spans residues 1–35; it reads MAKGEWKRSGADDLPLPGRSECEVFDDGTNTFFWR. Residues 36–56 traverse the membrane as a helical segment; that stretch reads AHTVTVLFILTCALVYVTLLE. Residues 57-69 lie on the Lumenal side of the membrane; it reads ETPHDTAYNTKRG. Residues 70–90 form a helical membrane-spanning segment; the sequence is IVASILVFLCFGVTQAKDGPF. Over 91-99 the chain is Cytoplasmic; the sequence is TRPHPAYWR. The helical transmembrane segment at 100–120 threads the bilayer; that stretch reads FWLCVSVVYELFLIFILFQTV. Over 121–286 the chain is Lumenal; sequence HDGRQFMKYI…EWRPASNLRR (166 aa). The helical transmembrane segment at 287–307 threads the bilayer; it reads WLAVLGIIFMFLLAELNTFYL. Residue Lys308 is a topological domain, cytoplasmic. A helical membrane pass occupies residues 309 to 329; the sequence is FVMWMPPEHYLVLFRLVFFVN. Residues 330–349 are Lumenal-facing; sequence VGGVAMREIYDFMDDPKFHK. A helical membrane pass occupies residues 350-370; that stretch reads KLGQQAWIVAAITVTEFLIVV. The Cytoplasmic portion of the chain corresponds to 371–376; it reads KYDPNT. The helical transmembrane segment at 377 to 397 threads the bilayer; sequence IMLPIPFFITQCWILGIALIL. The Lumenal portion of the chain corresponds to 398-452; the sequence is VWTLWRFFIRDITLRYKETRRRRQEVSSERDGSSSAPSGRSKLNGSMDSVRHRKS. The disordered stretch occupies residues 419 to 452; that stretch reads RRQEVSSERDGSSSAPSGRSKLNGSMDSVRHRKS. Positions 430–444 are enriched in polar residues; it reads SSSAPSGRSKLNGSM.

Belongs to the phosphatidyl serine synthase family.

It localises to the endoplasmic reticulum membrane. It catalyses the reaction a 1,2-diacyl-sn-glycero-3-phosphoethanolamine + L-serine = a 1,2-diacyl-sn-glycero-3-phospho-L-serine + ethanolamine. It carries out the reaction 1-hexadecanoyl-2-(9Z-octadecenoyl)-sn-glycero-3-phosphoethanolamine + L-serine = 1-hexadecanoyl-2-(9Z-octadecenoyl)-sn-glycero-3-phospho-L-serine + ethanolamine. The enzyme catalyses 1-hexadecanoyl-2-(4Z,7Z,10Z,13Z,16Z,19Z-docosahexaenoyl)-sn-glycero-3-phosphoethanolamine + L-serine = 1-hexadecanoyl-2-(4Z,7Z,10Z,13Z,16Z,19Z-docosahexaenoyl)-sn-glycero-3-phosphoserine + ethanolamine. The catalysed reaction is 1-octadecanoyl-2-(5Z,8Z,11Z,14Z)-eicosatetraenoyl-sn-glycero-3-phosphoethanolamine + L-serine = 1-octadecanoyl-2-(5Z,8Z,11Z,14Z)-eicosatetraenoyl-sn-glycero-3-phosphoserine + ethanolamine. It catalyses the reaction 1-octadecanoyl-2-(4Z,7Z,10Z,13Z,16Z,19Z-docosahexaenoyl)-sn-glycero-3-phosphoethanolamine + L-serine = 1-octadecanoyl-2-(4Z,7Z,10Z,13Z,16Z,19Z-docosahexaenoyl)-sn-glycero-3-phosphoserine + ethanolamine. It carries out the reaction 1-(1Z-octadecenyl)-2-(4Z,7Z,10Z,13Z,16Z,19Z-docosahexaenoyl)-sn-glycero-3-phosphoethanolamine + L-serine = 1-(1Z-octadecenyl)-2-(4Z,7Z,10Z,13Z,16Z,19Z-docosahexaenoyl)-sn-glycero-3-phospho-L-serine + ethanolamine. The enzyme catalyses 1-octadecanoyl-2-(9Z-octadecenoyl)-sn-glycero-3-phosphoethanolamine + L-serine = 1-octadecanoyl-2-(9Z-octadecenoyl)-sn-glycero-3-phospho-L-serine + ethanolamine. The catalysed reaction is 1-(1Z-octadecenyl)-2-(9Z-octadecenoyl)-sn-glycero-3-phosphoethanolamine + L-serine = 1-(1Z-octadecenyl)-2-(9Z-octadecenoyl)-sn-glycero-3-phospho-L-serine + ethanolamine. It catalyses the reaction 1-(1Z-octadecenyl)-2-(5Z,8Z,11Z,14Z- eicosatetraenoyl)-sn-glycero-3-phosphoethanolamine + L-serine = 1-(1Z-octadecenyl)-2-(5Z,8Z,11Z,14Z-eicosatetraenoyl)-sn-glycero-3-phospho-L-serine + ethanolamine. Its pathway is phospholipid metabolism; phosphatidylserine biosynthesis. Functionally, catalyzes a base-exchange reaction in which the polar head group of phosphatidylethanolamine (PE) or phosphatidylcholine (PC) is replaced by L-serine. Catalyzes the conversion of phosphatatidylethanolamine and does not act on phosphatidylcholine. Can utilize both phosphatidylethanolamine (PE) plasmalogen and diacyl PE as substrate and the latter is six times better utilized, indicating the importance of an ester linkage at the sn-1 position. Although it shows no sn-1 fatty acyl preference, exhibits significant preference towards docosahexaenoic acid (22:6n-3) compared with 18:1 or 20:4 at the sn-2 position. The protein is Phosphatidylserine synthase 2 (ptdss2) of Danio rerio (Zebrafish).